Here is a 438-residue protein sequence, read N- to C-terminus: Trigger factor (438 aa).

A PPIase FKBP-type domain is found at 160–245; that stretch reads DDKVTIDFVG…VKKIQQAELP (86 aa).

This sequence belongs to the FKBP-type PPIase family. Tig subfamily.

It localises to the cytoplasm. The enzyme catalyses [protein]-peptidylproline (omega=180) = [protein]-peptidylproline (omega=0). In terms of biological role, involved in protein export. Acts as a chaperone by maintaining the newly synthesized protein in an open conformation. Functions as a peptidyl-prolyl cis-trans isomerase. The sequence is that of Trigger factor from Francisella tularensis subsp. holarctica (strain LVS).